A 336-amino-acid polypeptide reads, in one-letter code: MGSAWPAEIRKIAKISKRLLGATVILGFGVAEAQAAEFFGTFSSGPAGQFIDADPRPLFELSSDFSFDDPNGLKWPVPTGTRVDGASIPQTFWSIIGGPFEGAYLKASVIHDYFCETKSRTAHDTHRNFYYGMRANGVPGWKAKAMYWAVATYGPDWTLETKVVNELQCKPTPFGGRTCSSLPKMVTTTVEKQAINLEDPKALAVAVGKFNAIARNLKTSDGETLDLLPTGVVSGSLESIETNATNAREMFATSDYRLDPKLLGVILEPKQIKLDSIDAWPDGQIPSFTDVQAQGLPQTGGLVGGNGIVLSPAEFENFEQRLDLSPTDFTLPSKLE.

An N-terminal signal peptide occupies residues 1–33; sequence MGSAWPAEIRKIAKISKRLLGATVILGFGVAEA.

This is an uncharacterized protein from Sinorhizobium fredii (strain NBRC 101917 / NGR234).